A 120-amino-acid chain; its full sequence is Large ribosomal subunit protein uL18 (120 aa).

The protein belongs to the universal ribosomal protein uL18 family. As to quaternary structure, part of the 50S ribosomal subunit; part of the 5S rRNA/L5/L18/L25 subcomplex. Contacts the 5S and 23S rRNAs.

In terms of biological role, this is one of the proteins that bind and probably mediate the attachment of the 5S RNA into the large ribosomal subunit, where it forms part of the central protuberance. In Methylobacterium nodulans (strain LMG 21967 / CNCM I-2342 / ORS 2060), this protein is Large ribosomal subunit protein uL18.